The following is a 387-amino-acid chain: Mannitol-1-phosphate 5-dehydrogenase (387 aa).

3–14 contacts NAD(+); the sequence is ALHFGAGNIGRG.

This sequence belongs to the mannitol dehydrogenase family.

It carries out the reaction D-mannitol 1-phosphate + NAD(+) = beta-D-fructose 6-phosphate + NADH + H(+). The polypeptide is Mannitol-1-phosphate 5-dehydrogenase (Yersinia pestis bv. Antiqua (strain Antiqua)).